The sequence spans 254 residues: Triosephosphate isomerase (254 aa).

Asn-9–Lys-11 serves as a coordination point for substrate. His-96 (electrophile) is an active-site residue. Glu-168 acts as the Proton acceptor in catalysis. Positions 174 and 213 each coordinate substrate.

The protein belongs to the triosephosphate isomerase family. As to quaternary structure, homodimer.

The protein resides in the cytoplasm. It carries out the reaction D-glyceraldehyde 3-phosphate = dihydroxyacetone phosphate. Its pathway is carbohydrate biosynthesis; gluconeogenesis. It participates in carbohydrate degradation; glycolysis; D-glyceraldehyde 3-phosphate from glycerone phosphate: step 1/1. Functionally, involved in the gluconeogenesis. Catalyzes stereospecifically the conversion of dihydroxyacetone phosphate (DHAP) to D-glyceraldehyde-3-phosphate (G3P). This chain is Triosephosphate isomerase, found in Buchnera aphidicola subsp. Schizaphis graminum (strain Sg).